The primary structure comprises 420 residues: Homeobox-containing protein 1 (420 aa).

In terms of domain architecture, HNF-p1 spans 18 to 49 (DEPRFTIEQIDLLQRLRRTGMTKHEILHALET). Positions 56 to 139 (EHSDKFGRRS…GKMSPTRYHA (84 aa)) are disordered. Lys60 is covalently cross-linked (Glycyl lysine isopeptide (Lys-Gly) (interchain with G-Cter in SUMO2)). Composition is skewed to low complexity over residues 64–73 (RSSYGGSSYG) and 81–93 (ASSSTATASTQTQ). A compositionally biased stretch (polar residues) spans 94-132 (HSGMSPSPSNSYDTSPQPCTTNQNGRENNERLSTSNGKM). Residue Lys131 forms a Glycyl lysine isopeptide (Lys-Gly) (interchain with G-Cter in SUMO2) linkage. In terms of domain architecture, POU-specific atypical spans 145-241 (RSYSFEASEE…PGATLSMRPA (97 aa)). Ser148 bears the Phosphoserine mark. Residue Lys161 forms a Glycyl lysine isopeptide (Lys-Gly) (interchain with G-Cter in SUMO2) linkage. Ser170 carries the phosphoserine modification. Residues Lys174, Lys217, and Lys310 each participate in a glycyl lysine isopeptide (Lys-Gly) (interchain with G-Cter in SUMO2) cross-link. The segment at residues 267-341 (RRGSRFTWRK…NRRKEIKRRA (75 aa)) is a DNA-binding region (homeobox). A disordered region spans residues 353–385 (IDVQSPGGHSNSDDVDGNDYSEQDDSTSHSDHQ). Acidic residues predominate over residues 365–377 (DDVDGNDYSEQDD). Lys413 participates in a covalent cross-link: Glycyl lysine isopeptide (Lys-Gly) (interchain with G-Cter in SUMO1); alternate. A Glycyl lysine isopeptide (Lys-Gly) (interchain with G-Cter in SUMO2); alternate cross-link involves residue Lys413.

As to quaternary structure, associates with the telomerase holoenzyme complex. Interacts with DKC1, XRCC6 and COIL. In terms of tissue distribution, ubiquitous. Detected in pancreas, brain, spleen, placenta, prostate, thymus, liver, heart, bone marrow, skeletal muscle, stomach, uterus, testis, kidney, ovary, colon, lung, cardiac muscle and thyroid gland.

The protein resides in the nucleus. It is found in the cytoplasm. It localises to the chromosome. Its subcellular location is the telomere. The protein localises to the cajal body. The protein resides in the PML body. Its function is as follows. Binds directly to 5'-TTAGGG-3' repeats in telomeric DNA. Associates with the telomerase complex at sites of active telomere processing and positively regulates telomere elongation. Important for TERT binding to chromatin, indicating a role in recruitment of the telomerase complex to telomeres. Also plays a role in the alternative lengthening of telomeres (ALT) pathway in telomerase-negative cells where it promotes formation and/or maintenance of ALT-associated promyelocytic leukemia bodies (APBs). Enhances formation of telomere C-circles in ALT cells, suggesting a possible role in telomere recombination. Might also be involved in the DNA damage response at telomeres. In Homo sapiens (Human), this protein is Homeobox-containing protein 1.